The following is a 628-amino-acid chain: tRNA uridine 5-carboxymethylaminomethyl modification enzyme MnmG (628 aa).

FAD-binding positions include 11-16 (GAGHAG), Val123, and Ser178. 271-285 (GPRYCPSIETKIVTF) serves as a coordination point for NAD(+). Gln368 provides a ligand contact to FAD.

The protein belongs to the MnmG family. Homodimer. Heterotetramer of two MnmE and two MnmG subunits. Requires FAD as cofactor.

The protein localises to the cytoplasm. NAD-binding protein involved in the addition of a carboxymethylaminomethyl (cmnm) group at the wobble position (U34) of certain tRNAs, forming tRNA-cmnm(5)s(2)U34. The protein is tRNA uridine 5-carboxymethylaminomethyl modification enzyme MnmG of Bacteroides thetaiotaomicron (strain ATCC 29148 / DSM 2079 / JCM 5827 / CCUG 10774 / NCTC 10582 / VPI-5482 / E50).